The primary structure comprises 115 residues: Aspartate 1-decarboxylase (115 aa).

Ser24 functions as the Schiff-base intermediate with substrate; via pyruvic acid in the catalytic mechanism. At Ser24 the chain carries Pyruvic acid (Ser). Thr56 lines the substrate pocket. Tyr57 acts as the Proton donor in catalysis. A substrate-binding site is contributed by 72–74; the sequence is GAA.

This sequence belongs to the PanD family. In terms of assembly, heterooctamer of four alpha and four beta subunits. Requires pyruvate as cofactor. In terms of processing, is synthesized initially as an inactive proenzyme, which is activated by self-cleavage at a specific serine bond to produce a beta-subunit with a hydroxyl group at its C-terminus and an alpha-subunit with a pyruvoyl group at its N-terminus.

It is found in the cytoplasm. It catalyses the reaction L-aspartate + H(+) = beta-alanine + CO2. It functions in the pathway cofactor biosynthesis; (R)-pantothenate biosynthesis; beta-alanine from L-aspartate: step 1/1. In terms of biological role, catalyzes the pyruvoyl-dependent decarboxylation of aspartate to produce beta-alanine. This is Aspartate 1-decarboxylase from Pseudothermotoga lettingae (strain ATCC BAA-301 / DSM 14385 / NBRC 107922 / TMO) (Thermotoga lettingae).